A 190-amino-acid chain; its full sequence is uncharacterized protein (190 aa).

Over 1–55 (MSRLRRFNRKILSLSSDYTHDGESDQEDVSILPLDTEEQEELIQKFETNAHITNK) the chain is Cytoplasmic. A helical transmembrane segment spans residues 56–76 (LYINLLSILYLLYGGLLMILV). The Extracellular segment spans residues 77-80 (RKSR). A helical transmembrane segment spans residues 81–101 (GYIKLALLAGANSLICSCITL). At 102 to 123 (RYDIVNDYLLFKKFKLRVSNFS) the chain is on the cytoplasmic side. A helical membrane pass occupies residues 124-144 (INIINIILLVLMAWISFNHVV). Over 145–149 (EDKKT) the chain is Extracellular. Residues 150 to 170 (VLCLQVPMFLFWVAVLVKRWA) traverse the membrane as a helical segment. Over 171 to 190 (RNIEDEIADLRCLKYKYKNA) the chain is Cytoplasmic.

Its subcellular location is the membrane. This is an uncharacterized protein from Saccharomyces cerevisiae (strain ATCC 204508 / S288c) (Baker's yeast).